The following is a 455-amino-acid chain: tRNA-2-methylthio-N(6)-dimethylallyladenosine synthase (455 aa).

Residues 18-133 (KKLFIETYGC…LPELIAAVEA (116 aa)) form the MTTase N-terminal domain. [4Fe-4S] cluster is bound by residues Cys-27, Cys-63, Cys-97, Cys-171, Cys-175, and Cys-178. Residues 157-390 (CGNHISGFVS…IALQNRLSAE (234 aa)) enclose the Radical SAM core domain. In terms of domain architecture, TRAM spans 393–455 (QRCIGKTYEV…SSATLKGEEV (63 aa)).

The protein belongs to the methylthiotransferase family. MiaB subfamily. Monomer. [4Fe-4S] cluster serves as cofactor.

The protein resides in the cytoplasm. The enzyme catalyses N(6)-dimethylallyladenosine(37) in tRNA + (sulfur carrier)-SH + AH2 + 2 S-adenosyl-L-methionine = 2-methylsulfanyl-N(6)-dimethylallyladenosine(37) in tRNA + (sulfur carrier)-H + 5'-deoxyadenosine + L-methionine + A + S-adenosyl-L-homocysteine + 2 H(+). Functionally, catalyzes the methylthiolation of N6-(dimethylallyl)adenosine (i(6)A), leading to the formation of 2-methylthio-N6-(dimethylallyl)adenosine (ms(2)i(6)A) at position 37 in tRNAs that read codons beginning with uridine. This is tRNA-2-methylthio-N(6)-dimethylallyladenosine synthase from Bacteroides thetaiotaomicron (strain ATCC 29148 / DSM 2079 / JCM 5827 / CCUG 10774 / NCTC 10582 / VPI-5482 / E50).